The following is a 492-amino-acid chain: GMP reductase (492 aa).

NADP(+)-binding positions include 30-31 (SR) and Arg78. CBS domains follow at residues 99 to 162 (LIED…LVET) and 164 to 223 (MTPV…LNAT). Residues 260–262 (DIA) and 313–314 (VG) contribute to the NADP(+) site. K(+) is bound by residues Gly314, Gly316, and Cys319. Cys319 acts as the Thioimidate intermediate in catalysis. The active-site Proton donor/acceptor is Thr321. Arg322 is a K(+) binding site. Residues 352–354 (DGG), 375–376 (GN), and 401–403 (GMA) contribute to the GMP site. NADP(+) contacts are provided by residues Met402 and 454–457 (SGIS). The Microbody targeting signal motif lies at 490–492 (SKL).

The protein belongs to the IMPDH/GMPR family. GuaC type 1 subfamily. As to quaternary structure, homotetramer.

It localises to the glycosome. It carries out the reaction IMP + NH4(+) + NADP(+) = GMP + NADPH + 2 H(+). With respect to regulation, activated by GTP and inhibited by ATP and IMP. Mycophenolic acid (MPA) is a competitive inhibitor of the enzyme with respect to NADPH. Catalyzes the irreversible NADPH-dependent deamination of GMP to IMP. It functions in the conversion of nucleobase, nucleoside and nucleotide derivatives of G to A nucleotides, and in maintaining the intracellular balance of A and G nucleotides. In Leishmania major, this protein is GMP reductase.